Reading from the N-terminus, the 33-residue chain is Neurotoxin Nk-3FTx (33 aa).

Cystine bridges form between C3-C24 and C6-C11.

Expressed by the venom gland.

It localises to the secreted. Functionally, possible voltage-gated potassium channel (Kv) blocker. Decreases amplitude of compound action potential and conduction velocity in toad sciatic nerve. Has only mild anticoagulant activity even at a concentration of 5ug/ml. Shows no cytotoxicity towards human cell lines. The polypeptide is Neurotoxin Nk-3FTx (Naja kaouthia (Monocled cobra)).